A 389-amino-acid chain; its full sequence is MSSREEVVNFAAGPAAMITSVVEEFGKDFVNFQGLGMGVAEISHRSKQGSGIVTSAESNFRKLYNIPENFHILFMQGGGTEQFAACLYNVYAHHALKNGNAKSLVANYIITGAWSKKAYAEAERLGFPCHVAVDMKELAGKYGSLPEDKDLKFTPDGETSLVYYCDNETVHGVEFNEPPTNIPKGAIRVCDVSSNFISRKIDFTKHDIIFAGAQKNAGPAGITVVFVRDSVLARPTPAELHKLNIPVSPTVSDYKIMADNHSLYNTLPVATLHAINLGLEYMLEHGGLVALEASSIEKSKLLYDTLDKHDLYISVVEPAARSRMNVTFRIEPQELESEFLAEAEKHHLVQLKGYRSVGGIRASLYNAISVEQTRRLIDLLESFAKAHSN.

Arginine 45 is a binding site for L-glutamate. Residues 79–80 (GT), tryptophan 114, threonine 169, aspartate 191, and glutamine 214 each bind pyridoxal 5'-phosphate. At lysine 215 the chain carries N6-(pyridoxal phosphate)lysine. 265 to 266 (NT) serves as a coordination point for pyridoxal 5'-phosphate.

The protein belongs to the class-V pyridoxal-phosphate-dependent aminotransferase family. SerC subfamily. In terms of assembly, homodimer. Pyridoxal 5'-phosphate is required as a cofactor.

The catalysed reaction is O-phospho-L-serine + 2-oxoglutarate = 3-phosphooxypyruvate + L-glutamate. It catalyses the reaction 4-(phosphooxy)-L-threonine + 2-oxoglutarate = (R)-3-hydroxy-2-oxo-4-phosphooxybutanoate + L-glutamate. It functions in the pathway amino-acid biosynthesis; L-serine biosynthesis; L-serine from 3-phospho-D-glycerate: step 2/3. The protein operates within cofactor biosynthesis; pyridoxine 5'-phosphate biosynthesis; pyridoxine 5'-phosphate from D-erythrose 4-phosphate: step 3/5. Catalyzes the reversible conversion of 3-phosphohydroxypyruvate to phosphoserine and of 3-hydroxy-2-oxo-4-phosphonooxybutanoate to phosphohydroxythreonine. In Schizosaccharomyces pombe (strain 972 / ATCC 24843) (Fission yeast), this protein is Putative phosphoserine aminotransferase.